The following is a 958-amino-acid chain: MIEKNYQPADIEARMSVVWEDSLAFKAGRPDRRDAVPFTIVIPPPNVTGSLHMGHALNNTLQDILCRFERMRGRDVLWQPGTDHAGIATQMVVERQLMERQQPGRREMGREKFLERVWQWKAESGDTIINQLKRLGASCDWSRERFTMDEGLSKAVIKVFVELHRDGLIYKDKRLVNWDTKLLTAISDLEVQQTEVKGSLWYLRYPIEGKTFSPEDPSSFIVVATTRPETMLGDTGVAVHPDDERYQKLIGKHVILPLVGRKVEIVADDYSDPEKGSGAVKVTPAHDFNDFEVGNRHGLRRISVLDKEGCLDLLDNEDYLRDLPEGAAQFAEEFNKVDRFVARKRIVERLESFGFVERIEPHTHMVPHGDRSNSVIEPYLTDQWYVDAKTLAKPAIAAVRSGETSFVPKNWEKTYFEWMENIQPWCISRQLWWGHQIPAWYGPDGKVFVAETEEEAISHALGYYVEQEVITAEQGREMALDRNKREGFITRDEDVLDTWFSSALWPFSTLGWPEDAPEVQRYYPTNALVTGFDIIFFWVARMMMMGLHFMKEVPFSTIYIHALVRDEKGAKMSKSKGNVIDPLHLIDEYGADALRFTLAAMAAQGRDIKLATSRVEGYRNFATKLWNASRFAEMNHCAVPEGFEPAKAKETLNRWIAHESAHTTREVTEAIEAYRFNDAAGAIYRFVWNVYCDWYVELAKPVLLGPDSPAKDETRAMVAWARDEILKLLHPFMPFITEELWEVTAKRDGLLALAAWPLKPAEPTPEQLAMFAAAAGPTDPLISPALIVPIFDHADFTDPKAEAEIGWVIDLVTQIRSVRAEMNIPPATLTALVLAGASAETRERAPRWTDVIKRMARLSDISFADRAPDGAVQLLVRGEVAALPLKGVIDVAAERTRLDKEIGKADADIKRAESKLANEKFVANAAEEVVEEEREKREAALARKAKLLEALERLKQAS.

A 'HIGH' region motif is present at residues 45–55 (PNVTGSLHMGH). A 'KMSKS' region motif is present at residues 571 to 575 (KMSKS). ATP is bound at residue Lys-574. A coiled-coil region spans residues 892 to 958 (AAERTRLDKE…EALERLKQAS (67 aa)).

It belongs to the class-I aminoacyl-tRNA synthetase family. ValS type 1 subfamily. As to quaternary structure, monomer.

It is found in the cytoplasm. The enzyme catalyses tRNA(Val) + L-valine + ATP = L-valyl-tRNA(Val) + AMP + diphosphate. Catalyzes the attachment of valine to tRNA(Val). As ValRS can inadvertently accommodate and process structurally similar amino acids such as threonine, to avoid such errors, it has a 'posttransfer' editing activity that hydrolyzes mischarged Thr-tRNA(Val) in a tRNA-dependent manner. The chain is Valine--tRNA ligase from Bradyrhizobium diazoefficiens (strain JCM 10833 / BCRC 13528 / IAM 13628 / NBRC 14792 / USDA 110).